The following is a 300-amino-acid chain: Ribokinase (300 aa).

Residues serine 11–aspartate 13, glycine 39–asparagine 43, and glutamate 139 each bind substrate. ATP-binding positions include asparagine 183 and threonine 210–glycine 215. K(+)-binding residues include aspartate 236 and threonine 238. Glycine 241–aspartate 242 provides a ligand contact to ATP. Aspartate 242 lines the substrate pocket. The active-site Proton acceptor is the aspartate 242. Residues serine 272, lysine 275, and glycine 277 each coordinate K(+).

This sequence belongs to the carbohydrate kinase PfkB family. Ribokinase subfamily. As to quaternary structure, homodimer. Mg(2+) is required as a cofactor.

The protein resides in the cytoplasm. The catalysed reaction is D-ribose + ATP = D-ribose 5-phosphate + ADP + H(+). Its pathway is carbohydrate metabolism; D-ribose degradation; D-ribose 5-phosphate from beta-D-ribopyranose: step 2/2. Its activity is regulated as follows. Activated by a monovalent cation that binds near, but not in, the active site. The most likely occupant of the site in vivo is potassium. Ion binding induces a conformational change that may alter substrate affinity. In terms of biological role, catalyzes the phosphorylation of ribose at O-5 in a reaction requiring ATP and magnesium. The resulting D-ribose-5-phosphate can then be used either for sythesis of nucleotides, histidine, and tryptophan, or as a component of the pentose phosphate pathway. In Lactococcus lactis subsp. lactis (strain IL1403) (Streptococcus lactis), this protein is Ribokinase.